A 301-amino-acid chain; its full sequence is Acetyl-coenzyme A carboxylase carboxyl transferase subunit beta (301 aa).

The CoA carboxyltransferase N-terminal domain maps to 29-298 (LWVKCPETGQ…AEPAEEEAEP (270 aa)).

Belongs to the AccD/PCCB family. As to quaternary structure, acetyl-CoA carboxylase is a heterohexamer composed of biotin carboxyl carrier protein (AccB), biotin carboxylase (AccC) and two subunits each of ACCase subunit alpha (AccA) and ACCase subunit beta (AccD).

It is found in the cytoplasm. It catalyses the reaction N(6)-carboxybiotinyl-L-lysyl-[protein] + acetyl-CoA = N(6)-biotinyl-L-lysyl-[protein] + malonyl-CoA. It participates in lipid metabolism; malonyl-CoA biosynthesis; malonyl-CoA from acetyl-CoA: step 1/1. Component of the acetyl coenzyme A carboxylase (ACC) complex. Biotin carboxylase (BC) catalyzes the carboxylation of biotin on its carrier protein (BCCP) and then the CO(2) group is transferred by the transcarboxylase to acetyl-CoA to form malonyl-CoA. The sequence is that of Acetyl-coenzyme A carboxylase carboxyl transferase subunit beta from Methylobacterium nodulans (strain LMG 21967 / CNCM I-2342 / ORS 2060).